The chain runs to 413 residues: uncharacterized protein (413 aa).

A Response regulatory domain is found at 2–129 (RILIVDDENT…KTTWKLRLME (128 aa)). Aspartate 54 bears the 4-aspartylphosphate mark.

This is an uncharacterized protein from Sinorhizobium fredii (strain NBRC 101917 / NGR234).